We begin with the raw amino-acid sequence, 739 residues long: Catalase-peroxidase (739 aa).

The tract at residues 1 to 33 is disordered; the sequence is MSVEHPPIGEANTEPAAGGCPVTGRLRHPLQGG. Residues 106–229 constitute a cross-link (tryptophyl-tyrosyl-methioninium (Trp-Tyr) (with M-255)); sequence WHSAGTYRSS…LAAVQMGLIY (124 aa). The active-site Proton acceptor is the His107. Residues 113-134 form a disordered region; sequence RSSDGRGGANTGQQRFAPLNSW. Positions 229-255 form a cross-link, tryptophyl-tyrosyl-methioninium (Tyr-Met) (with W-106); that stretch reads YVNPEGPNGNPDPLAAAVDIKDTFGRM. His270 is a binding site for heme b.

Belongs to the peroxidase family. Peroxidase/catalase subfamily. In terms of assembly, homodimer or homotetramer. Heme b serves as cofactor. Formation of the three residue Trp-Tyr-Met cross-link is important for the catalase, but not the peroxidase activity of the enzyme.

The enzyme catalyses H2O2 + AH2 = A + 2 H2O. It carries out the reaction 2 H2O2 = O2 + 2 H2O. In terms of biological role, bifunctional enzyme with both catalase and broad-spectrum peroxidase activity. The polypeptide is Catalase-peroxidase (Nocardia farcinica (strain IFM 10152)).